The primary structure comprises 258 residues: Peptidase inhibitor 15 (258 aa).

The first 21 residues, 1–21 (MTIIAAISCVFLFSILCETSA), serve as a signal peptide directing secretion. Residues 22–60 (LVLPNSTDLLLSNNNFTDIETALAAHLDSAKIPKARRKR) constitute a propeptide that is removed on maturation. 3 N-linked (GlcNAc...) asparagine glycosylation sites follow: Asn26, Asn36, and Asn124. The 141-residue stretch at 71–211 (LDYHNQVRGK…RRAVYLVCNY (141 aa)) folds into the SCP domain.

It belongs to the CRISP family.

The protein resides in the secreted. Its function is as follows. Serine protease inhibitor which displays weak inhibitory activity against trypsin. May play a role in facial patterning during embryonic development. In Gallus gallus (Chicken), this protein is Peptidase inhibitor 15 (PI15).